A 124-amino-acid chain; its full sequence is Small ribosomal subunit protein uS13 (124 aa).

The segment at 96–124 (LPVRGQRTKTNARTRKGPRRTVAGKKKAK) is disordered.

This sequence belongs to the universal ribosomal protein uS13 family. As to quaternary structure, part of the 30S ribosomal subunit. Forms a loose heterodimer with protein S19. Forms two bridges to the 50S subunit in the 70S ribosome.

In terms of biological role, located at the top of the head of the 30S subunit, it contacts several helices of the 16S rRNA. In the 70S ribosome it contacts the 23S rRNA (bridge B1a) and protein L5 of the 50S subunit (bridge B1b), connecting the 2 subunits; these bridges are implicated in subunit movement. Contacts the tRNAs in the A and P-sites. This Symbiobacterium thermophilum (strain DSM 24528 / JCM 14929 / IAM 14863 / T) protein is Small ribosomal subunit protein uS13.